The chain runs to 124 residues: Glutaredoxin-2 (124 aa).

Residues C13 and C16 are joined by a disulfide bond.

The protein belongs to the glutaredoxin family. Homodimer.

It localises to the host cytoplasm. Functionally, glutaredoxin necessary for virion morphogenesis and virus replication. Functions as a thiol-disulfide transfer protein between membrane-associated OPG128 and substrates OPG095 or OPG053. The complete pathway for formation of disulfide bonds in intracellular virion membrane proteins sequentially involves oxidation of OPG072, OPG128 and OPG088. Exhibit thioltransferase and dehydroascorbate reductase activities in vitro. This is Glutaredoxin-2 (OPG088) from Oryctolagus cuniculus (Rabbit).